Here is a 427-residue protein sequence, read N- to C-terminus: MSRSETLFNNAQKHIPGGVNSPVRAFKSVGGTPLFFKHAEGAYVLDEDDKRYVDYVGSWGPMILGHSHPDVLDAVRRQLDHGLSYGAPTALEVEMADLVCSMVPSMEMVRMVSSGTEATMSAIRLARGYTGRDSIIKFEGCYHGHSDSLLVKAGSGALTFGVPNSPGVPAAFAKHTLTLPFNDIEAVRKTLGEVGKEVACIIVEPVAGNMNCVPPAPGFLEGLREACDEHGVVLIFDEVMTGFRVALGGAQAYYGVTPDLSTFGKIIGGGMPVGAFGGKREIMQQISPLGPVYQAGTLSGNPLAMAAGLTTLRLISRPGFHDELTAYTTRMLDGLQQRADAAGIPFVTTQAGGMFGLYFSGADAIVTFEDVMASDVERFKRFFHLMLDGGVYLAPSAFEAGFTSIAHGDKELEITLNAAEKAFAALK.

Lys265 bears the N6-(pyridoxal phosphate)lysine mark.

Belongs to the class-III pyridoxal-phosphate-dependent aminotransferase family. HemL subfamily. In terms of assembly, homodimer. It depends on pyridoxal 5'-phosphate as a cofactor.

Its subcellular location is the cytoplasm. The enzyme catalyses (S)-4-amino-5-oxopentanoate = 5-aminolevulinate. The protein operates within porphyrin-containing compound metabolism; protoporphyrin-IX biosynthesis; 5-aminolevulinate from L-glutamyl-tRNA(Glu): step 2/2. The sequence is that of Glutamate-1-semialdehyde 2,1-aminomutase from Pseudomonas aeruginosa (strain LESB58).